The chain runs to 295 residues: ATP synthase gamma chain (295 aa).

This sequence belongs to the ATPase gamma chain family. In terms of assembly, F-type ATPases have 2 components, CF(1) - the catalytic core - and CF(0) - the membrane proton channel. CF(1) has five subunits: alpha(3), beta(3), gamma(1), delta(1), epsilon(1). CF(0) has three main subunits: a, b and c.

It is found in the cell inner membrane. In terms of biological role, produces ATP from ADP in the presence of a proton gradient across the membrane. The gamma chain is believed to be important in regulating ATPase activity and the flow of protons through the CF(0) complex. The protein is ATP synthase gamma chain of Maricaulis maris (strain MCS10) (Caulobacter maris).